A 209-amino-acid polypeptide reads, in one-letter code: Protein GrpE (209 aa).

Polar residues predominate over residues 1–13 (MSNDSSKAKQNQV). Residues 1 to 27 (MSNDSSKAKQNQVDEAVEGEIITDNEN) are disordered. Over residues 15–27 (EAVEGEIITDNEN) the composition is skewed to acidic residues.

It belongs to the GrpE family. In terms of assembly, homodimer.

Its subcellular location is the cytoplasm. Functionally, participates actively in the response to hyperosmotic and heat shock by preventing the aggregation of stress-denatured proteins, in association with DnaK and GrpE. It is the nucleotide exchange factor for DnaK and may function as a thermosensor. Unfolded proteins bind initially to DnaJ; upon interaction with the DnaJ-bound protein, DnaK hydrolyzes its bound ATP, resulting in the formation of a stable complex. GrpE releases ADP from DnaK; ATP binding to DnaK triggers the release of the substrate protein, thus completing the reaction cycle. Several rounds of ATP-dependent interactions between DnaJ, DnaK and GrpE are required for fully efficient folding. This chain is Protein GrpE, found in Shewanella sediminis (strain HAW-EB3).